We begin with the raw amino-acid sequence, 423 residues long: AP-1 complex subunit mu-1 (423 aa).

S2 bears the N-acetylserine mark. T152, T154, and T223 each carry phosphothreonine. Positions K168–R421 constitute an MHD domain.

It belongs to the adaptor complexes medium subunit family. As to quaternary structure, adaptor protein complex 1 (AP-1) is a heterotetramer composed of two large adaptins (gamma-type subunit AP1G1 and beta-type subunit AP1B1), a medium adaptin (mu-type subunit AP1M1 or AP1M2) and a small adaptin (sigma-type subunit AP1S1 or AP1S2 or AP1S3). Interacts with MARCHF11. In terms of processing, phosphorylation of membrane-bound AP1M1/AP1M2 increases its affinity for sorting signals.

Its subcellular location is the cytoplasmic vesicle. The protein localises to the clathrin-coated vesicle membrane. The protein resides in the golgi apparatus. Its function is as follows. Subunit of clathrin-associated adaptor protein complex 1 that plays a role in protein sorting in the trans-Golgi network (TGN) and endosomes. The AP complexes mediate the recruitment of clathrin to membranes and the recognition of sorting signals within the cytosolic tails of transmembrane cargo molecules. This is AP-1 complex subunit mu-1 from Rattus norvegicus (Rat).